A 450-amino-acid chain; its full sequence is Exodeoxyribonuclease 7 large subunit (450 aa).

It belongs to the XseA family. In terms of assembly, heterooligomer composed of large and small subunits.

The protein resides in the cytoplasm. It carries out the reaction Exonucleolytic cleavage in either 5'- to 3'- or 3'- to 5'-direction to yield nucleoside 5'-phosphates.. Functionally, bidirectionally degrades single-stranded DNA into large acid-insoluble oligonucleotides, which are then degraded further into small acid-soluble oligonucleotides. This is Exodeoxyribonuclease 7 large subunit from Listeria welshimeri serovar 6b (strain ATCC 35897 / DSM 20650 / CCUG 15529 / CIP 8149 / NCTC 11857 / SLCC 5334 / V8).